Reading from the N-terminus, the 217-residue chain is RING-H2 finger protein ATL40 (217 aa).

A helical membrane pass occupies residues I28–L48. The RING-type; atypical zinc-finger motif lies at C100 to R142. 2 stretches are compositionally biased toward basic and acidic residues: residues T143 to P160 and D186 to Q217. Residues T143–Q217 form a disordered region.

Belongs to the RING-type zinc finger family. ATL subfamily.

Its subcellular location is the membrane. It carries out the reaction S-ubiquitinyl-[E2 ubiquitin-conjugating enzyme]-L-cysteine + [acceptor protein]-L-lysine = [E2 ubiquitin-conjugating enzyme]-L-cysteine + N(6)-ubiquitinyl-[acceptor protein]-L-lysine.. Its pathway is protein modification; protein ubiquitination. In Arabidopsis thaliana (Mouse-ear cress), this protein is RING-H2 finger protein ATL40 (ATL40).